The chain runs to 529 residues: Scarecrow-like protein 13 (529 aa).

Residues 51–81 show a composition bias toward polar residues; that stretch reads ASGSLPSYDSPSVSITSGRSPFSPQGSQSCI. Positions 51–84 are disordered; it reads ASGSLPSYDSPSVSITSGRSPFSPQGSQSCISDL. In terms of domain architecture, GRAS spans 146–525; sequence LLALTPQLDL…RPMATCSVWK (380 aa). The leucine repeat I (LRI) stretch occupies residues 153-213; the sequence is LDLKEVLVEA…RARLEGSGSN (61 aa). Positions 232–297 are VHIID; it reads MSVLYEICPY…GGPPLLRVTG (66 aa). The VHIID signature appears at 263 to 267; it reads VHIID. A leucine repeat II (LRII) region spans residues 313–345; it reads LVGERLATLAQSCGVPFEFHDAIMSGCKVQREH. The PFYRE stretch occupies residues 354–448; that stretch reads VVVNFPYVLH…QHCVARDIVN (95 aa). The interval 451 to 525 is SAW; the sequence is ACEESERVER…RPMATCSVWK (75 aa).

This sequence belongs to the GRAS family. In terms of tissue distribution, expressed in roots, hypocotyls, cotyledons, shoot apex, leaves, flowers and siliques.

Its subcellular location is the cytoplasm. It is found in the nucleus. Its function is as follows. Probable transcription factor that acts as a positive regulator of continuous red light signals downstream of phytochrome B (phyB). Required for the regulation of hypocotyl elongation during de-etiolation. May be required to modulate phytochrome A (phyA) signal transduction in a phyB-independent way. The chain is Scarecrow-like protein 13 (SCL13) from Arabidopsis thaliana (Mouse-ear cress).